Consider the following 314-residue polypeptide: Malate dehydrogenase (314 aa).

Residues 11–16 (GSGNIG) and D35 contribute to the NAD(+) site. Substrate-binding residues include R84 and R90. NAD(+)-binding positions include N97 and 120–122 (ITN). N122 and R153 together coordinate substrate. The Proton acceptor role is filled by H177.

The protein belongs to the LDH/MDH superfamily. MDH type 3 family.

It carries out the reaction (S)-malate + NAD(+) = oxaloacetate + NADH + H(+). Its function is as follows. Catalyzes the reversible oxidation of malate to oxaloacetate. In Rickettsia rickettsii (strain Iowa), this protein is Malate dehydrogenase.